The following is a 154-amino-acid chain: Myoglobin (154 aa).

A Globin domain is found at 2 to 148 (GLSEAEWQLV…FRKDIAAKYK (147 aa)). At serine 4 the chain carries Phosphoserine. Histidine 65 is a binding site for nitrite. Histidine 65 lines the O2 pocket. Threonine 68 is modified (phosphothreonine). Histidine 94 is a heme b binding site.

It belongs to the globin family. Monomeric.

The protein resides in the cytoplasm. The protein localises to the sarcoplasm. It catalyses the reaction Fe(III)-heme b-[protein] + nitric oxide + H2O = Fe(II)-heme b-[protein] + nitrite + 2 H(+). It carries out the reaction H2O2 + AH2 = A + 2 H2O. In terms of biological role, monomeric heme protein which primary function is to store oxygen and facilitate its diffusion within muscle tissues. Reversibly binds oxygen through a pentacoordinated heme iron and enables its timely and efficient release as needed during periods of heightened demand. Depending on the oxidative conditions of tissues and cells, and in addition to its ability to bind oxygen, it also has a nitrite reductase activity whereby it regulates the production of bioactive nitric oxide. Under stress conditions, like hypoxia and anoxia, it also protects cells against reactive oxygen species thanks to its pseudoperoxidase activity. This chain is Myoglobin (MB), found in Indopacetus pacificus (Longman's beaked whale).